The chain runs to 528 residues: Proteinaceous RNase P 2 (528 aa).

Basic and acidic residues predominate over residues 1-16 (MAASDQHRSRRHDESS). Residues 1-28 (MAASDQHRSRRHDESSSRPNKKKKVSRN) are disordered. 4 PPR repeats span residues 29 to 64 (PETN…EVRL), 72 to 107 (LLYL…GISP), 108 to 142 (NEAS…GGVS), and 145 to 179 (RLRT…GIAL). The PRORP domain occupies 275 to 511 (VSSTGRCLSC…NEESSRTWMC (237 aa)). Cysteine 281 and cysteine 284 together coordinate Zn(2+). Aspartate 343, aspartate 421, aspartate 422, and aspartate 440 together coordinate Mg(2+). 2 residues coordinate Zn(2+): histidine 494 and cysteine 511.

The protein belongs to the PPR family. P subfamily. In terms of assembly, monomer; forms dimers in crystallo but monomers in solution. Mg(2+) serves as cofactor.

It is found in the nucleus. It catalyses the reaction Endonucleolytic cleavage of RNA, removing 5'-extranucleotides from tRNA precursor.. Endonuclease RNase P responsible for the 5' maturation of tRNA precursors. Preferentially binds precursor tRNAs containing short 5' leaders and 3' trailers. Also involved in the maturation of mRNA and small nucleolar RNA (snoRNA). This is Proteinaceous RNase P 2 (PRORP2) from Arabidopsis thaliana (Mouse-ear cress).